Reading from the N-terminus, the 186-residue chain is Ferritin heavy chain (186 aa).

The region spanning 16-165 (QNYHQDSEAA…DHVTNLRKMG (150 aa)) is the Ferritin-like diiron domain. Residues Glu33, Glu68, His71, Glu113, and Gln147 each contribute to the Fe cation site. Ser184 carries the post-translational modification Phosphoserine.

It belongs to the ferritin family. In terms of assembly, oligomer of 24 subunits. There are two types of subunits: L (light) chain and H (heavy) chain. The major chain can be light or heavy, depending on the species and tissue type. The functional molecule forms a roughly spherical shell with a diameter of 12 nm and contains a central cavity into which the insoluble mineral iron core is deposited. Interacts with NCOA4; NCOA4 promotes targeting of the iron-binding ferritin complex to autolysosomes following starvation or iron depletion.

Its subcellular location is the cytoplasm. The protein localises to the lysosome. It is found in the cytoplasmic vesicle. The protein resides in the autophagosome. It catalyses the reaction 4 Fe(2+) + O2 + 4 H(+) = 4 Fe(3+) + 2 H2O. In terms of biological role, stores iron in a soluble, non-toxic, readily available form. Important for iron homeostasis. Has ferroxidase activity. Iron is taken up in the ferrous form and deposited as ferric hydroxides after oxidation. Also plays a role in delivery of iron to cells. Mediates iron uptake in capsule cells of the developing kidney. Delivery to lysosomes is mediated by the cargo receptor NCOA4 for autophagic degradation and release of iron. In Cricetulus griseus (Chinese hamster), this protein is Ferritin heavy chain (FTH1).